Reading from the N-terminus, the 190-residue chain is Threonylcarbamoyl-AMP synthase (190 aa).

In terms of domain architecture, YrdC-like spans 7–190; it reads NFVLADIVRA…ALTGKRFRQG (184 aa).

Belongs to the SUA5 family. TsaC subfamily.

The protein resides in the cytoplasm. It carries out the reaction L-threonine + hydrogencarbonate + ATP = L-threonylcarbamoyladenylate + diphosphate + H2O. Required for the formation of a threonylcarbamoyl group on adenosine at position 37 (t(6)A37) in tRNAs that read codons beginning with adenine. Catalyzes the conversion of L-threonine, HCO(3)(-)/CO(2) and ATP to give threonylcarbamoyl-AMP (TC-AMP) as the acyladenylate intermediate, with the release of diphosphate. The chain is Threonylcarbamoyl-AMP synthase from Yersinia pestis bv. Antiqua (strain Angola).